The following is a 444-amino-acid chain: Tubulin beta-8 chain (444 aa).

Residues 1–4 (MREI) carry the MREI motif motif. The GTP site is built by Q11, E69, S138, G142, T143, and G144. Mg(2+) is bound at residue E69. S172 carries the post-translational modification Phosphoserine; by CDK1. The GTP site is built by N204 and N226. At E436 the chain carries 5-glutamyl polyglutamate.

The protein belongs to the tubulin family. In terms of assembly, dimer of alpha and beta chains. A typical microtubule is a hollow water-filled tube with an outer diameter of 25 nm and an inner diameter of 15 nM. Alpha-beta heterodimers associate head-to-tail to form protofilaments running lengthwise along the microtubule wall with the beta-tubulin subunit facing the microtubule plus end conferring a structural polarity. Microtubules usually have 13 protofilaments but different protofilament numbers can be found in some organisms and specialized cells. Requires Mg(2+) as cofactor. In terms of processing, some glutamate residues at the C-terminus are polyglycylated, resulting in polyglycine chains on the gamma-carboxyl group. Glycylation is mainly limited to tubulin incorporated into axonemes (cilia and flagella) whereas glutamylation is prevalent in neuronal cells, centrioles, axonemes, and the mitotic spindle. Both modifications can coexist on the same protein on adjacent residues, and lowering polyglycylation levels increases polyglutamylation, and reciprocally. Cilia and flagella glycylation is required for their stability and maintenance. Flagella glycylation controls sperm motility. Post-translationally, some glutamate residues at the C-terminus are polyglutamylated, resulting in polyglutamate chains on the gamma-carboxyl group. Polyglutamylation plays a key role in microtubule severing by spastin (SPAST). SPAST preferentially recognizes and acts on microtubules decorated with short polyglutamate tails: severing activity by SPAST increases as the number of glutamates per tubulin rises from one to eight, but decreases beyond this glutamylation threshold. Glutamylation is also involved in cilia motility. Phosphorylated on Ser-172 by CDK1 during the cell cycle, from metaphase to telophase, but not in interphase. This phosphorylation inhibits tubulin incorporation into microtubules.

It localises to the cytoplasm. It is found in the cytoskeleton. The protein resides in the spindle. Its function is as follows. Tubulin is the major constituent of microtubules, a cylinder consisting of laterally associated linear protofilaments composed of alpha- and beta-tubulin heterodimers. Microtubules grow by the addition of GTP-tubulin dimers to the microtubule end, where a stabilizing cap forms. Below the cap, tubulin dimers are in GDP-bound state, owing to GTPase activity of alpha-tubulin. Has a key role in meiotic spindle assembly and oocyte maturation. In Papio hamadryas (Hamadryas baboon), this protein is Tubulin beta-8 chain (TUBB8).